We begin with the raw amino-acid sequence, 446 residues long: Zinc finger protein 19 (446 aa).

One can recognise a KRAB domain in the interval 2–73 (VTFEDVAVHF…EAQDDPPAET (72 aa)). 9 C2H2-type zinc fingers span residues 149-171 (FICE…QRIH), 177-199 (FECS…QRIH), 205-227 (YQCE…QRIH), 233-255 (YYCT…QRIH), 261-283 (YECN…QKIH), 289-311 (YECN…QRIH), 317-339 (YSCK…QRIH), 345-367 (FDCV…LRIH), and 373-395 (YVCD…QRIH). Residues 401–423 (YEYSKYEKAFGTSSQLGHLEHVH) form a C2H2-type 10; degenerate zinc finger.

Belongs to the krueppel C2H2-type zinc-finger protein family.

It localises to the nucleus. In terms of biological role, may be involved in transcriptional regulation. In Pongo abelii (Sumatran orangutan), this protein is Zinc finger protein 19 (ZNF19).